A 212-amino-acid chain; its full sequence is MDLTNLRAKYTTRGLDIKDLDQNPFKQFETWFNEAIEAKLTEPNAFSLATVGKDMMPSIRTVLLKIFDEKGFVFFTNYKSTKANQIKENPKAAALFPWLDLERQVKIEGDIQKISTTESLKYFLSRPKGSQIGAWVSHQSQVISSRSLLEQKFDEIKNKFVNGEVPFPSFWGGYIIKPTKIEFWQGGQDRLHDRFLYELKENGAWSISRLAP.

Residues 7–10 and Lys65 each bind substrate; that span reads RAKY. FMN is bound by residues 60–65, 75–76, Lys82, and Gln104; these read RTVLLK and FT. Positions 122, 126, and 130 each coordinate substrate. FMN is bound by residues 139–140 and Trp184; that span reads QS. 190–192 contributes to the substrate binding site; it reads RLH. Arg194 lines the FMN pocket.

Belongs to the pyridoxamine 5'-phosphate oxidase family. As to quaternary structure, homodimer. The cofactor is FMN.

It catalyses the reaction pyridoxamine 5'-phosphate + O2 + H2O = pyridoxal 5'-phosphate + H2O2 + NH4(+). The catalysed reaction is pyridoxine 5'-phosphate + O2 = pyridoxal 5'-phosphate + H2O2. It functions in the pathway cofactor metabolism; pyridoxal 5'-phosphate salvage; pyridoxal 5'-phosphate from pyridoxamine 5'-phosphate: step 1/1. Its pathway is cofactor metabolism; pyridoxal 5'-phosphate salvage; pyridoxal 5'-phosphate from pyridoxine 5'-phosphate: step 1/1. In terms of biological role, catalyzes the oxidation of either pyridoxine 5'-phosphate (PNP) or pyridoxamine 5'-phosphate (PMP) into pyridoxal 5'-phosphate (PLP). The polypeptide is Pyridoxine/pyridoxamine 5'-phosphate oxidase (Aliarcobacter butzleri (strain RM4018) (Arcobacter butzleri)).